A 186-amino-acid polypeptide reads, in one-letter code: ATP synthase subunit delta (186 aa).

Belongs to the ATPase delta chain family. As to quaternary structure, F-type ATPases have 2 components, F(1) - the catalytic core - and F(0) - the membrane proton channel. F(1) has five subunits: alpha(3), beta(3), gamma(1), delta(1), epsilon(1). F(0) has three main subunits: a(1), b(2) and c(10-14). The alpha and beta chains form an alternating ring which encloses part of the gamma chain. F(1) is attached to F(0) by a central stalk formed by the gamma and epsilon chains, while a peripheral stalk is formed by the delta and b chains.

Its subcellular location is the cell inner membrane. F(1)F(0) ATP synthase produces ATP from ADP in the presence of a proton or sodium gradient. F-type ATPases consist of two structural domains, F(1) containing the extramembraneous catalytic core and F(0) containing the membrane proton channel, linked together by a central stalk and a peripheral stalk. During catalysis, ATP synthesis in the catalytic domain of F(1) is coupled via a rotary mechanism of the central stalk subunits to proton translocation. Its function is as follows. This protein is part of the stalk that links CF(0) to CF(1). It either transmits conformational changes from CF(0) to CF(1) or is implicated in proton conduction. The protein is ATP synthase subunit delta of Bacteroides thetaiotaomicron (strain ATCC 29148 / DSM 2079 / JCM 5827 / CCUG 10774 / NCTC 10582 / VPI-5482 / E50).